Consider the following 307-residue polypeptide: D-alanine--D-alanine ligase (307 aa).

Positions K101 to E301 constitute an ATP-grasp domain. Residue M128–T182 coordinates ATP. D251, E268, and N270 together coordinate Mg(2+).

Belongs to the D-alanine--D-alanine ligase family. It depends on Mg(2+) as a cofactor. Mn(2+) serves as cofactor.

Its subcellular location is the cytoplasm. It carries out the reaction 2 D-alanine + ATP = D-alanyl-D-alanine + ADP + phosphate + H(+). The protein operates within cell wall biogenesis; peptidoglycan biosynthesis. Cell wall formation. The polypeptide is D-alanine--D-alanine ligase (Methylocella silvestris (strain DSM 15510 / CIP 108128 / LMG 27833 / NCIMB 13906 / BL2)).